We begin with the raw amino-acid sequence, 527 residues long: Bifunctional purine biosynthesis protein PurH (527 aa).

The MGS-like domain occupies 1–149 (MTADLLPVRR…KNFARVAVAT (149 aa)).

The protein belongs to the PurH family.

It carries out the reaction (6R)-10-formyltetrahydrofolate + 5-amino-1-(5-phospho-beta-D-ribosyl)imidazole-4-carboxamide = 5-formamido-1-(5-phospho-D-ribosyl)imidazole-4-carboxamide + (6S)-5,6,7,8-tetrahydrofolate. It catalyses the reaction IMP + H2O = 5-formamido-1-(5-phospho-D-ribosyl)imidazole-4-carboxamide. It functions in the pathway purine metabolism; IMP biosynthesis via de novo pathway; 5-formamido-1-(5-phospho-D-ribosyl)imidazole-4-carboxamide from 5-amino-1-(5-phospho-D-ribosyl)imidazole-4-carboxamide (10-formyl THF route): step 1/1. Its pathway is purine metabolism; IMP biosynthesis via de novo pathway; IMP from 5-formamido-1-(5-phospho-D-ribosyl)imidazole-4-carboxamide: step 1/1. In Stenotrophomonas maltophilia (strain R551-3), this protein is Bifunctional purine biosynthesis protein PurH.